We begin with the raw amino-acid sequence, 161 residues long: Cytochrome c-type biogenesis protein CcmE (161 aa).

The Cytoplasmic segment spans residues methionine 1–arginine 8. The chain crosses the membrane as a helical; Signal-anchor for type II membrane protein span at residues leucine 9 to alanine 29. Residues leucine 30–tyrosine 161 are Periplasmic-facing. Heme is bound by residues histidine 131 and tyrosine 135.

It belongs to the CcmE/CycJ family.

It is found in the cell inner membrane. Heme chaperone required for the biogenesis of c-type cytochromes. Transiently binds heme delivered by CcmC and transfers the heme to apo-cytochromes in a process facilitated by CcmF and CcmH. The polypeptide is Cytochrome c-type biogenesis protein CcmE (Shewanella loihica (strain ATCC BAA-1088 / PV-4)).